Reading from the N-terminus, the 475-residue chain is Eukaryotic translation initiation factor 2 subunit 3 (475 aa).

The tr-type G domain occupies 38–247; sequence QATINIGTIG…IVNKIPVPPR (210 aa). The interval 47 to 54 is G1; that stretch reads GHVAHGKS. 50-55 provides a ligand contact to GTP; that stretch reads AHGKST. The interval 75-79 is G2; it reads NITIK. Residues 133–136 form a G3 region; the sequence is DCPG. Residues 189-192 and 224-226 each bind GTP; these read NKID and SAQ. The segment at 189–192 is G4; sequence NKID. Residues 224–226 are G5; the sequence is SAQ. The segment at 456–468 is interacts with CDC123; the sequence is GQIFGGKTITPVL.

It belongs to the TRAFAC class translation factor GTPase superfamily. Classic translation factor GTPase family. EIF2G subfamily. As to quaternary structure, eukaryotic translation initiation factor 2 eIF2 is a heterotrimeric complex composed of an alpha, a beta and a gamma subunit. The factors eIF-1, eIF-2, eIF-3, TIF5/eIF-5 and methionyl-tRNAi form a multifactor complex (MFC) that may bind to the 40S ribosome.

It is found in the cytoplasm. Its subcellular location is the cytosol. The enzyme catalyses GTP + H2O = GDP + phosphate + H(+). Functionally, as a subunit of eukaryotic initiation factor 2 eIF2, involved in the early steps of protein synthesis. In the presence of GTP, eIF-2 forms a ternary complex with initiator tRNA Met-tRNAi and then recruits the 40S ribosomal complex and initiation factors eIF-1, eIF-1A and eIF-3 to form the 43S pre-initiation complex (43S PIC), a step that determines the rate of protein translation. The 43S PIC binds to mRNA and scans downstream to the initiation codon, where it forms a 48S initiation complex by codon-anticodon base pairing. This leads to the displacement of eIF-1 to allow GTPase-activating protein (GAP) eIF-5-mediated hydrolysis of eIF2-bound GTP. Hydrolysis of GTP and release of Pi, which makes GTP hydrolysis irreversible, causes the release of the eIF-2-GDP binary complex from the 40S subunit, an event that is essential for the subsequent joining of the 60S ribosomal subunit to form an elongation-competent 80S ribosome. In order for eIF-2 to recycle and catalyze another round of initiation, the GDP bound to eIF-2 must be exchanged with GTP by way of a reaction catalyzed by GDP-GTP exchange factor (GEF) eIF-2B. The sequence is that of Eukaryotic translation initiation factor 2 subunit 3 from Drosophila melanogaster (Fruit fly).